An 870-amino-acid chain; its full sequence is H(+)/Cl(-) exchange transporter 6 (870 aa).

Residues 1–80 (MAGCRGSVCC…KKGRRYEAVK (80 aa)) lie on the Cytoplasmic side of the membrane. Helical transmembrane passes span 81–113 (WMVVFAIGVCTGLVGLFVDFSVRLFTQLKFGVV) and 128–150 (LSLLELLGFNLTFVFLASLLVLI). The Selectivity filter part_1 motif lies at 156-160 (GSGIP). A chloride-binding site is contributed by S157. An intramembrane region (helical) is located at residues 159–166 (IPEIKCYL). Transmembrane regions (helical) follow at residues 176–194 (RLRTLLCKVFGVLFSVSGG) and 200–217 (EGPMIHSGAVVGAGLPQF). The Selectivity filter part_2 motif lies at 198 to 202 (GKEGP). Intramembrane regions (helical) lie at residues 241–253 (FVSAGAAAGVAAA) and 257–265 (PIGGTLFSL). The next 3 helical transmembrane spans lie at 277–294 (TWKVLFCSMSATFTLNFF), 335–364 (GFFVVMGVIGGLLGATFNCLNKRLAKYRMR), and 371–392 (KLVRVLESLLVSLVTTVVVFVA). N-linked (GlcNAc...) asparagine glycans are attached at residues N410, N423, and N433. 2 helical membrane passes run 463-482 (PVTLALFFILYFLLACWTFG) and 488-512 (GLFVPSLLCGAAFGRLVANVLKSYI). The short motif at 488-492 (GLFVP) is the Selectivity filter part_3 element. Position 490 (F490) interacts with chloride. Positions 520 to 534 (GTFALIGAAAFLGGV) form an intramembrane region, helical. The segment at residues 535 to 537 (VRM) is an intramembrane region (note=Loop between two helices). An intramembrane region (helical) is located at residues 538 to 549 (TISLTVILIEST). The note=Loop between two helices intramembrane region spans 550-553 (NEIT). Residues 554–572 (YGLPIMVTLMVAKWTGDLF) traverse the membrane as a helical segment. Topologically, residues 573-870 (NKGIYDVHIG…ARLRQHYQTL (298 aa)) are cytoplasmic. Y577 serves as a coordination point for chloride. The CBS 1 domain maps to 606 to 663 (MEPNLTYVYPHTRIQSLVSILRTTVHHAFPVVTENRGNEKEFMKGNQLISNNIKFKKS). ATP is bound at residue 631 to 633 (HHA). At S774 the chain carries Phosphoserine. In terms of domain architecture, CBS 2 spans 808-869 (MNPSPFTVSP…QARLRQHYQT (62 aa)). 850-853 (TRHN) contributes to the ATP binding site.

It belongs to the chloride channel (TC 2.A.49) family. ClC-6/CLCN6 subfamily. N-glycosylated on several asparagine residues. Detected in whole brain and in hippocampus neurons (at protein level). Detected in brain, trigeminus, dorsal root ganglion, spinal cord, eye, kidney, testis, skeletal muscle, thymus and pancreas. Isoform ClC-6c is expressed only in kidney.

The protein localises to the late endosome membrane. It carries out the reaction 2 chloride(in) + H(+)(out) = 2 chloride(out) + H(+)(in). In terms of biological role, voltage-gated channel mediating the exchange of chloride ions against protons. Functions as antiporter and contributes to the acidification of the late endosome lumen. The CLC channel family contains both chloride channels and proton-coupled anion transporters that exchange chloride or another anion for protons. The presence of conserved gating glutamate residues is typical for family members that function as antiporters. This chain is H(+)/Cl(-) exchange transporter 6, found in Mus musculus (Mouse).